The chain runs to 401 residues: Probable inactive purple acid phosphatase 14 (401 aa).

The first 30 residues, 1 to 30, serve as a signal peptide directing secretion; sequence MEETRRRFVISSVLSVSLIYLCLSTCHVSA. A glycan (N-linked (GlcNAc...) asparagine) is linked at Asn79. Asn197 serves as a coordination point for substrate. Asn197 is a binding site for Zn(2+). Asn246 is a glycosylation site (N-linked (GlcNAc...) asparagine). Position 256 (His256) interacts with Zn(2+). N-linked (GlcNAc...) asparagine glycosylation is present at Asn266. Residue His305 participates in Zn(2+) binding. 305-307 contacts substrate; sequence HDH. Residue His307 participates in Fe cation binding. Asn371 and Asn384 each carry an N-linked (GlcNAc...) asparagine glycan.

Belongs to the metallophosphoesterase superfamily. Purple acid phosphatase family. As to quaternary structure, homodimer. It depends on Fe cation as a cofactor. Zn(2+) is required as a cofactor. In terms of tissue distribution, specifically expressed in flowers.

It localises to the secreted. This is Probable inactive purple acid phosphatase 14 (PAP14) from Arabidopsis thaliana (Mouse-ear cress).